The following is a 481-amino-acid chain: GDP-fucose protein O-fucosyltransferase 3 (481 aa).

The Cytoplasmic segment spans residues 1 to 8 (MVRFQRRK). The chain crosses the membrane as a helical; Signal-anchor for type II membrane protein span at residues 9-31 (LLASCLCVTATVFLMVTLQVVVE). Over 32 to 481 (LGKFERKKLK…EEFWALVFKD (450 aa)) the chain is Lumenal. Asn110, Asn168, and Asn318 each carry an N-linked (GlcNAc...) asparagine glycan. Cysteines 389 and 392 form a disulfide. Asn468 carries N-linked (GlcNAc...) asparagine glycosylation.

It belongs to the glycosyltransferase 10 family. In terms of tissue distribution, widely expressed, with a higher expression in liver and thymus.

The protein localises to the endoplasmic reticulum membrane. The catalysed reaction is L-threonyl-[protein] + GDP-beta-L-fucose = 3-O-(alpha-L-fucosyl)-L-threonyl-[protein] + GDP + H(+). It catalyses the reaction L-seryl-[protein] + GDP-beta-L-fucose = 3-O-(alpha-L-fucosyl)-L-seryl-[protein] + GDP + H(+). The protein operates within protein modification; protein glycosylation. Its function is as follows. Protein O-fucosyltransferase that specifically catalyzes O-fucosylation of serine or threonine residues in EMI domains of target proteins, such as MMRN1, MMRN2 and EMID1. Attaches fucose through an O-glycosidic linkage. O-fucosylation of EMI domain-containing proteins may be required for facilitating protein folding and secretion. May also show alpha-(1,3)-fucosyltransferase activity toward the innermost N-acetyl glucosamine (GlcNAc) residue in biantennary N-glycan acceptors. However, this was tested with a library of synthetic substrates and this activity is unsure in vivo. May be involved in biosynthesis of Lewis X-carrying biantennary N-glycans that regulate neuron stem cell self-renewal during brain development. This Mus musculus (Mouse) protein is GDP-fucose protein O-fucosyltransferase 3.